We begin with the raw amino-acid sequence, 849 residues long: SMY2 homolog 2 (849 aa).

The region spanning 149–205 (ESQWKYIDSNGNIQGPFGTNNMSQWYQGGYFTPTLQICRLATSPEPFGVNDRFIRLG) is the GYF domain. 4 disordered regions span residues 305 to 505 (APLS…TTNL), 527 to 547 (DLKK…QLDR), 593 to 612 (TKIN…IKPD), and 634 to 661 (NRAS…NTSN). Positions 308–318 (STTSSRSNKTT) are enriched in low complexity. Residues 319–331 (SSHEEKVPSHEEA) show a composition bias toward basic and acidic residues. A Phosphothreonine modification is found at T350. Composition is skewed to basic and acidic residues over residues 361–375 (TKQE…KEQN), 387–403 (VDRK…KSKD), and 425–443 (LLEE…EEQR). Residues 410–484 (EEQKRFAKAE…EKQKELLNNI (75 aa)) adopt a coiled-coil conformation. A compositionally biased stretch (basic residues) spans 444-455 (KLKKEKKLKQKQ). Basic and acidic residues predominate over residues 456-479 (KKEEEKLKKKKKEEGKLEKEKQKE). The span at 483 to 505 (NILTGDTETPSSENTATSITTNL) shows a compositional bias: polar residues. The span at 594–605 (KINSQSKINKAN) shows a compositional bias: polar residues. Residues 644–661 (SRTPSPSSSALNSSNTSN) are compositionally biased toward low complexity.

It belongs to the SMY2/mpd2 family. As to quaternary structure, interacts with ribosomes. Interacts with EAP1 and MSL5 (via the GYP domain).

It localises to the cytoplasm. The chain is SMY2 homolog 2 (SYH1) from Saccharomyces cerevisiae (strain ATCC 204508 / S288c) (Baker's yeast).